The primary structure comprises 251 residues: Triosephosphate isomerase (251 aa).

9-11 (NWK) contributes to the substrate binding site. The Electrophile role is filled by His-95. Catalysis depends on Glu-167, which acts as the Proton acceptor. Residues Gly-173, Ser-212, and 233–234 (GG) each bind substrate.

This sequence belongs to the triosephosphate isomerase family. Homodimer.

Its subcellular location is the cytoplasm. It catalyses the reaction D-glyceraldehyde 3-phosphate = dihydroxyacetone phosphate. It functions in the pathway carbohydrate biosynthesis; gluconeogenesis. Its pathway is carbohydrate degradation; glycolysis; D-glyceraldehyde 3-phosphate from glycerone phosphate: step 1/1. Involved in the gluconeogenesis. Catalyzes stereospecifically the conversion of dihydroxyacetone phosphate (DHAP) to D-glyceraldehyde-3-phosphate (G3P). The chain is Triosephosphate isomerase from Pseudomonas entomophila (strain L48).